The primary structure comprises 202 residues: Orotate phosphoribosyltransferase (202 aa).

5-phospho-alpha-D-ribose 1-diphosphate contacts are provided by residues Lys-93 and 113 to 121 (EDIITTGGS). The orotate site is built by Thr-117 and Arg-145.

Belongs to the purine/pyrimidine phosphoribosyltransferase family. PyrE subfamily. In terms of assembly, homodimer. The cofactor is Mg(2+).

It catalyses the reaction orotidine 5'-phosphate + diphosphate = orotate + 5-phospho-alpha-D-ribose 1-diphosphate. It participates in pyrimidine metabolism; UMP biosynthesis via de novo pathway; UMP from orotate: step 1/2. Catalyzes the transfer of a ribosyl phosphate group from 5-phosphoribose 1-diphosphate to orotate, leading to the formation of orotidine monophosphate (OMP). This is Orotate phosphoribosyltransferase from Campylobacter fetus subsp. fetus (strain 82-40).